The sequence spans 137 residues: Probable DNA-directed RNA polymerases I, II, and III subunit RPABC2 (137 aa).

2 stretches are compositionally biased toward acidic residues: residues Met1–Glu27 and Asn34–Asp43. Residues Met1–Asp43 are disordered.

The protein belongs to the archaeal Rpo6/eukaryotic RPB6 RNA polymerase subunit family. Component of the RNA polymerase I (Pol I), RNA polymerase II (Pol II) and RNA polymerase III (Pol III) complexes consisting of at least 13, 12 and 17 subunits, respectively.

Its subcellular location is the nucleus. Functionally, DNA-dependent RNA polymerases catalyze the transcription of DNA into RNA using the four ribonucleoside triphosphates as substrates. Common component of RNA polymerases I, II and III which synthesize ribosomal RNA precursors, mRNA precursors and many functional non-coding RNAs, and small RNAs, such as 5S rRNA and tRNAs, respectively. Pol II is the central component of the basal RNA polymerase II transcription machinery. Pols are composed of mobile elements that move relative to each other. In Pol II, RPB6 is part of the clamp element and together with parts of RPB1 and RPB2 forms a pocket to which the RPB4-RPB7 subcomplex binds. The chain is Probable DNA-directed RNA polymerases I, II, and III subunit RPABC2 (rpb-6) from Caenorhabditis elegans.